The primary structure comprises 458 residues: MDVILEQLETHTQNKPNDIALHIDDETITYSQLNARITSAVESLQKYSLNPVVAINMKSPVQSIICYLALHRLHKVPMMMEGKWQSTIHRQLIEKYGIKDVIGDTCLMQNIDSPMFIDSTQLQHYPNLLHIGFTSGTTGLPKAYYRDEDSWLASFEVNEMLMLKNENAIAAPGPLSHSLTLYALLFALSSGRTFIGQTTFHPERLLNQCRKISSYKVAMFLVPTMIKSLLLVYNNEHTIQSFFSSGDKLYSSIFKKIKNQANDINLIEFFGTSETSFISYNLNQQAPVESVGVLFPNVELKTTNHDHNGIGTICVKSNMMFSGYVSEQCINNDEWFVTNDNGYVKEQYLYLTGRQHDMLIIGGQNIYPAHVERLLTQSSSIDEAIIIGIPNERFGQIGVLLYSGDVTLTHKNVKQFLNKKVKRYEIPSMIHHVEKMYYTASGKIAREKMMSMYLRGEL.

Belongs to the ATP-dependent AMP-binding enzyme family.

The polypeptide is Putative long chain fatty acid-CoA ligase VraA (vraA) (Staphylococcus aureus (strain MRSA252)).